The following is a 104-amino-acid chain: Large ribosomal subunit protein bL21 (104 aa).

This sequence belongs to the bacterial ribosomal protein bL21 family. In terms of assembly, part of the 50S ribosomal subunit. Contacts protein L20.

Functionally, this protein binds to 23S rRNA in the presence of protein L20. The chain is Large ribosomal subunit protein bL21 from Francisella tularensis subsp. holarctica (strain FTNF002-00 / FTA).